A 185-amino-acid chain; its full sequence is Ribosome-recycling factor (185 aa).

Belongs to the RRF family.

Its subcellular location is the cytoplasm. Its function is as follows. Responsible for the release of ribosomes from messenger RNA at the termination of protein biosynthesis. May increase the efficiency of translation by recycling ribosomes from one round of translation to another. In Desulforapulum autotrophicum (strain ATCC 43914 / DSM 3382 / VKM B-1955 / HRM2) (Desulfobacterium autotrophicum), this protein is Ribosome-recycling factor.